Here is a 141-residue protein sequence, read N- to C-terminus: Ly6/PLAUR domain-containing protein 1 (141 aa).

Residues 1 to 20 form the signal peptide; sequence MWVLGIAATFCGLFWLPGLA. Cystine bridges form between C25–C54, C28–C37, C46–C71, C77–C100, C88–C97, and C101–C106. The UPAR/Ly6 domain maps to 25 to 108; that stretch reads CYQCEEFQLN…SCCNTPLCNG (84 aa). A glycan (N-linked (GlcNAc...) asparagine) is linked at N45. The GPI-anchor amidated glycine moiety is linked to residue G115. A propeptide spans 116–141 (removed in mature form); it reads SSASAIRPELFTTVLFFNLALCLAHC.

Interacts with CHRNA4 and nAChRs containing alpha-4:beta-2 (CHRNA4:CHRNB2) and alpha-7 (CHRNA7) subunits.

The protein localises to the cell membrane. In terms of biological role, believed to act as a modulator of nicotinic acetylcholine receptors (nAChRs) activity. In vitro increases receptor desensitization and decreases affinity for ACh of alpha-4:beta-2-containing nAChRs. May play a role in the intracellular trafficking of alpha-4:beta-2 and alpha-7-containing nAChRs and may inhibit their expression at the cell surface. May be involved in the control of anxiety. This is Ly6/PLAUR domain-containing protein 1 (Lypd1) from Rattus norvegicus (Rat).